Consider the following 105-residue polypeptide: Vacuolar ATPase assembly integral membrane protein VMA21 homolog (105 aa).

The segment at 1–26 is disordered; it reads MSTKNKKAAGGNGGAPKQTRQQSHDS. Residues 1-36 are Cytoplasmic-facing; sequence MSTKNKKAAGGNGGAPKQTRQQSHDSQDYSSFKTVL. Residues 37-57 traverse the membrane as a helical segment; it reads FYCMLIVFLPVLTFFVLKGFV. The Lumenal portion of the chain corresponds to 58–68; it reads LDQFLDISEVK. The helical transmembrane segment at 69-89 threads the bilayer; that stretch reads VNIASAVGAVVALHVALGLYI. Residues 90–105 are Cytoplasmic-facing; the sequence is YRAYFGAPGSKASKTD.

The protein belongs to the VMA21 family.

The protein resides in the endoplasmic reticulum membrane. Its subcellular location is the endoplasmic reticulum-Golgi intermediate compartment membrane. It localises to the cytoplasmic vesicle. It is found in the COPII-coated vesicle membrane. In terms of biological role, required for the assembly of the V0 complex of the vacuolar ATPase (V-ATPase) in the endoplasmic reticulum. This chain is Vacuolar ATPase assembly integral membrane protein VMA21 homolog, found in Drosophila yakuba (Fruit fly).